Here is a 204-residue protein sequence, read N- to C-terminus: Urease accessory protein UreG (204 aa).

Residue 11 to 18 participates in GTP binding; sequence GPVGAGKT.

Belongs to the SIMIBI class G3E GTPase family. UreG subfamily. As to quaternary structure, homodimer. UreD, UreF and UreG form a complex that acts as a GTP-hydrolysis-dependent molecular chaperone, activating the urease apoprotein by helping to assemble the nickel containing metallocenter of UreC. The UreE protein probably delivers the nickel.

The protein resides in the cytoplasm. Functionally, facilitates the functional incorporation of the urease nickel metallocenter. This process requires GTP hydrolysis, probably effectuated by UreG. The protein is Urease accessory protein UreG of Staphylococcus aureus (strain MSSA476).